Here is a 100-residue protein sequence, read N- to C-terminus: Large ribosomal subunit protein bL21 (100 aa).

It belongs to the bacterial ribosomal protein bL21 family. Part of the 50S ribosomal subunit. Contacts protein L20.

This protein binds to 23S rRNA in the presence of protein L20. The polypeptide is Large ribosomal subunit protein bL21 (Mycoplasmopsis synoviae (strain 53) (Mycoplasma synoviae)).